The primary structure comprises 861 residues: DNA mismatch repair protein MutS (861 aa).

Residue 613–620 coordinates ATP; sequence GPNMGGKS.

This sequence belongs to the DNA mismatch repair MutS family.

Its function is as follows. This protein is involved in the repair of mismatches in DNA. It is possible that it carries out the mismatch recognition step. This protein has a weak ATPase activity. This Dichelobacter nodosus (strain VCS1703A) protein is DNA mismatch repair protein MutS.